We begin with the raw amino-acid sequence, 334 residues long: D-fructose 1,6-bisphosphatase class 2/sedoheptulose 1,7-bisphosphatase (334 aa).

Mn(2+) contacts are provided by Asp-33, Glu-57, Asp-85, and Glu-88. Substrate contacts are provided by residues 88-90 (EGT), Tyr-119, 164-166 (RAR), and 186-188 (DGD). Glu-213 provides a ligand contact to Mn(2+).

Belongs to the FBPase class 2 family. Homotetramer. Mn(2+) serves as cofactor.

The enzyme catalyses beta-D-fructose 1,6-bisphosphate + H2O = beta-D-fructose 6-phosphate + phosphate. It carries out the reaction D-sedoheptulose 1,7-bisphosphate + H2O = D-sedoheptulose 7-phosphate + phosphate. Its pathway is carbohydrate biosynthesis; Calvin cycle. Functionally, catalyzes the hydrolysis of fructose 1,6-bisphosphate (Fru 1,6-P2) and sedoheptulose 1,7-bisphosphate (Sed 1,7-P2) to fructose 6-phosphate and sedoheptulose 7-phosphate, respectively. This chain is D-fructose 1,6-bisphosphatase class 2/sedoheptulose 1,7-bisphosphatase, found in Prochlorococcus marinus (strain MIT 9303).